Here is a 172-residue protein sequence, read N- to C-terminus: RNA silencing suppressor p19 (172 aa).

2 disordered regions span residues M1 to G38 and V152 to E172. Basic and acidic residues-rich tracts occupy residues D9–D20 and G159–E172.

The protein belongs to the tombusvirus protein p19 family. In terms of assembly, homodimer.

Viral suppressor of RNA silencing which binds specifically to silencing RNAs (siRNAs). Acts as a molecular caliper to specifically select siRNAs based on the length of the duplex region of the RNA. The polypeptide is RNA silencing suppressor p19 (Havel river virus (HaRV)).